Reading from the N-terminus, the 264-residue chain is Splicing factor U2af 38 kDa subunit (264 aa).

Residues 12–40 (EKDKVNCSFYFKIGACRHGDRCSRIHNKP) form a C3H1-type 1 zinc finger. S19 bears the Phosphoserine mark. The region spanning 44–149 (QTVLLQNLYV…RPVYSELSPV (106 aa)) is the RRM domain. The segment at 151 to 178 (DFREACCRQYEMGECTRSGFCNFMHLKP) adopts a C3H1-type 2 zinc-finger fold. Basic residues predominate over residues 190-219 (RRRRARSRSRSPGRRRGSRSRSRSPGRRGG). The disordered stretch occupies residues 190-264 (RRRRARSRSR…GGGGGGGGRY (75 aa)). Positions 233-251 (NERDNMRGNDRGNDRDRRK) are enriched in basic and acidic residues. The segment covering 253–264 (GGGGGGGGGGRY) has biased composition (gly residues).

It belongs to the splicing factor SR family. In terms of assembly, associates with a 65 kDa protein.

It localises to the nucleus. Functionally, necessary for the splicing of pre-mRNA. Binds to the polypyrimidine tract of introns early during spliceosome assembly. This Drosophila melanogaster (Fruit fly) protein is Splicing factor U2af 38 kDa subunit (U2af38).